We begin with the raw amino-acid sequence, 87 residues long: Small ribosomal subunit protein uS15 (87 aa).

The protein belongs to the universal ribosomal protein uS15 family. As to quaternary structure, part of the 30S ribosomal subunit. Forms a bridge to the 50S subunit in the 70S ribosome, contacting the 23S rRNA.

Its function is as follows. One of the primary rRNA binding proteins, it binds directly to 16S rRNA where it helps nucleate assembly of the platform of the 30S subunit by binding and bridging several RNA helices of the 16S rRNA. Functionally, forms an intersubunit bridge (bridge B4) with the 23S rRNA of the 50S subunit in the ribosome. This Dehalococcoides mccartyi (strain ATCC BAA-2100 / JCM 16839 / KCTC 5957 / BAV1) protein is Small ribosomal subunit protein uS15.